The chain runs to 129 residues: Aspartate 1-decarboxylase (129 aa).

Ser25 (schiff-base intermediate with substrate; via pyruvic acid) is an active-site residue. Ser25 carries the pyruvic acid (Ser) modification. Thr57 serves as a coordination point for substrate. Tyr58 (proton donor) is an active-site residue. 73–75 (GAA) contacts substrate.

The protein belongs to the PanD family. As to quaternary structure, heterooctamer of four alpha and four beta subunits. The cofactor is pyruvate. Post-translationally, is synthesized initially as an inactive proenzyme, which is activated by self-cleavage at a specific serine bond to produce a beta-subunit with a hydroxyl group at its C-terminus and an alpha-subunit with a pyruvoyl group at its N-terminus.

It is found in the cytoplasm. The enzyme catalyses L-aspartate + H(+) = beta-alanine + CO2. It participates in cofactor biosynthesis; (R)-pantothenate biosynthesis; beta-alanine from L-aspartate: step 1/1. In terms of biological role, catalyzes the pyruvoyl-dependent decarboxylation of aspartate to produce beta-alanine. This chain is Aspartate 1-decarboxylase, found in Hydrogenovibrio crunogenus (strain DSM 25203 / XCL-2) (Thiomicrospira crunogena).